A 526-amino-acid polypeptide reads, in one-letter code: Cell adhesion molecule CEACAM1 (526 aa).

The signal sequence occupies residues 1-34; that stretch reads MGHLSAPLHRVRVPWQGLLLTASLLTFWNPPTTA. At Q35 the chain carries Pyrrolidone carboxylic acid. In terms of domain architecture, Ig-like V-type spans 35–142; that stretch reads QLTTESMPFN…EATGQFHVYP (108 aa). The Extracellular portion of the chain corresponds to 35–428; sequence QLTTESMPFN…LPQENGLSPG (394 aa). The segment at 39–142 is required for homophilic binding; it reads ESMPFNVAEG…EATGQFHVYP (104 aa). N-linked (GlcNAc...) asparagine glycans are attached at residues N104, N111, N115, N152, N182, N197, N208, N224, N232, N254, N274, N288, N292, N302, N309, N345, N351, N363, N378, and N405. Ig-like C2-type domains are found at residues 145–232, 237–317, and 323–413; these read PKPS…VTLN, PDTP…KTII, and PVVA…IMLN. Residues C167 and C215 are joined by a disulfide bond. An intrachain disulfide couples C259 to C299. The cysteines at positions 348 and 396 are disulfide-linked. The chain crosses the membrane as a helical span at residues 429–452; it reads AIAGIVIGVVALVALIAVALACFL. An interaction with calmodulin region spans residues 450–462; it reads CFLHFGKTGRASD. The tract at residues 452 to 526 is interaction with FLNA; it reads LHFGKTGRAS…EIIYSEVKKQ (75 aa). Residues 453-526 lie on the Cytoplasmic side of the membrane; it reads HFGKTGRASD…EIIYSEVKKQ (74 aa). The segment covering 461-482 has biased composition (basic and acidic residues); it reads SDQRDLTEHKPSVSNHTQDHSN. The interval 461–513 is disordered; sequence SDQRDLTEHKPSVSNHTQDHSNDPPNKMNEVTYSTLNFEAQQPTQPTSASPSL. Residues 489–513 show a composition bias toward polar residues; sequence NEVTYSTLNFEAQQPTQPTSASPSL. The required for interaction with PTPN11 and PTPN6 and for control of phosphorylation level stretch occupies residues 489-526; sequence NEVTYSTLNFEAQQPTQPTSASPSLTATEIIYSEVKKQ. Y493 is modified (phosphotyrosine; by SRC, LCK, INSR and EGFR). S508 bears the Phosphoserine mark. Y520 is modified (phosphotyrosine; by INSR, SRC and LCK). An essential for interaction with PTPN11 and PTPN6 region spans residues 520-523; the sequence is YSEV.

The protein belongs to the immunoglobulin superfamily. CEA family. As to quaternary structure, monomer. Oligomer. Heterodimer. Homodimer. Cis-dimer/oligomer (via Ig-like C2-type and/or via cytoplasmic domains); induced by trans-homophilic cell adhesion through an allosteric mechanism transmitted by the Ig-like V-type domain, and is regulated by intracellular calcium and calmodulin. Interacts (via cytoplasmic domain) with calmodulin in a calcium dependent manner; reduces homophilic cell adhesion through dissociation of dimer. Isoform 1 interacts (via cytoplasmic domain) with PTPN11 (preferentially) and PTPN6; cis-homodimer form is preferred; this interaction is decreased by formation of Isoform 1 /Isoform 8 cis-heterodimers and is dependent on the monomer/dimer equilibrium; this interaction is phosphorylation-dependent. Isoform 1 interacts with LYN. Isoform 1 interacts (via cytoplasmic domain) with SRC (via SH2 domain); this interaction is regulated by trans-homophilic cell adhesion. Isoform 1 interacts (via cytoplasmic domain) with LCK; mediates phosphorylation at Tyr-493 and Tyr-520 resulting in PTPN6 association. Isoform 1 interacts with PTPN6; this interaction is phosphorylation-dependent and causes a profound decrease in TCR stimulation-induced CD247 and ZAP70 phosphorylation. Isoform 1 interacts with TCR/CD3 complex through TCR beta chain and CD3E; colocalizes at the cell surface and upon stimulation of the TCR/CD3 complex recruits PTPN6 in the TCR/CD3 complex, resulting in dephosphorylation of CD247 and ZAP70. Isoform 1 interacts (via cytoplasmic domain) with SHC1 (via SH2 domain); SHC1 mediates interaction with INSR or EGFR in a Ser-508 phosphorylation-dependent manner. Isoform 1 interacts with EGFR; the interaction is indirect. Isoform 1 interacts with CSF3R; down-regulates the CSF3R-STAT3 pathway through recruitment of PTPN6 that dephosphorylates CSF3R. Isoform 1 (phosphorylated form) interacts with TLR4 and SYK; recruits PTPN6 that dephosphorylates SYK, reducing the production of reactive oxygen species (ROS) and lysosome disruption, leading to a reduction of the inflammasome activity. Isoform 1 interacts with FLNA; inhibits cell migration and cell scattering by interfering with the interaction of FLNA with RALA. Isoform 1 interacts (via cytoplasmic domain) with PXN; the interaction is phosphotyrosyl-dependent. Isoform 1 interacts with KLRK1; recruits PTPN6 that dephosphorylates VAV1. Isoform 1 interacts with CEACAM8. Isoform 1 interacts with FASN; this interaction is insulin and phosphorylation-dependent; reduces fatty-acid synthase activity. Interacts (via Ig-like V-type) with HAVCR2 (via Ig-like V-type); facilitates the maturation and cell surface expression of HAVCR2 thereby regulating T cell tolerance induction. Isoform 8 interacts (via the cytoplasmic domain) with ANXA2; this interaction is regulated by phosphorylation and appears in the AIIt complex. Interacts (via Lewis X moieties) with CD209 (via C-type lectin domain); this interaction is regulated by the glycosylation pattern of CEACAM1 on cell types and regulates contact between dendritic cells and neutrophils. Post-translationally, phosphorylated on serine and tyrosine. Isoform 1 is phosphorylated on tyrosine by Src family kinases like SRC and LCK and by receptor like CSF3R, EGFR and INSR upon stimulation. Phosphorylated at Ser-508; mediates activity. Phosphorylated at Tyr-493; regulates activity. Phosphorylated at Tyr-493 by EGFR and INSR upon stimulation; this phosphorylation is Ser-508-phosphorylation-dependent; mediates cellular internalization; increases interaction with downstream proteins like SHC1 and FASN. Phosphorylated at Tyr-493 and Tyr-520 by LCK; mediates PTPN6 association and is regulated by homophilic ligation of CEACAM1 in the absence of T cell activation. Phosphorylated at Tyr-520; mediates interaction with PTPN11. In terms of processing, phosphorylated on serine and threonine. In terms of tissue distribution, expressed in columnar epithelial cells of the colon (at protein level). The predominant forms expressed by T cells are those containing a long cytoplasmic domain. Expressed in granulocytes and lymphocytes. Leukocytes only express isoforms 6 and isoform 1.

Its subcellular location is the cell membrane. It localises to the lateral cell membrane. It is found in the apical cell membrane. The protein localises to the basal cell membrane. The protein resides in the cell junction. Its subcellular location is the adherens junction. It localises to the secreted. It is found in the cytoplasmic vesicle. The protein localises to the secretory vesicle membrane. The protein resides in the cell projection. Its subcellular location is the microvillus membrane. In terms of biological role, cell adhesion protein that mediates homophilic cell adhesion in a calcium-independent manner. Plays a role as coinhibitory receptor in immune response, insulin action and also functions as an activator during angiogenesis. Its coinhibitory receptor function is phosphorylation- and PTPN6 -dependent, which in turn, suppress signal transduction of associated receptors by dephosphorylation of their downstream effectors. Plays a role in immune response, of T cells, natural killer (NK) and neutrophils. Upon TCR/CD3 complex stimulation, inhibits TCR-mediated cytotoxicity by blocking granule exocytosis by mediating homophilic binding to adjacent cells, allowing interaction with and phosphorylation by LCK and interaction with the TCR/CD3 complex which recruits PTPN6 resulting in dephosphorylation of CD247 and ZAP70. Also inhibits T cell proliferation and cytokine production through inhibition of JNK cascade and plays a crucial role in regulating autoimmunity and anti-tumor immunity by inhibiting T cell through its interaction with HAVCR2. Upon natural killer (NK) cells activation, inhibit KLRK1-mediated cytolysis of CEACAM1-bearing tumor cells by trans-homophilic interactions with CEACAM1 on the target cell and lead to cis-interaction between CEACAM1 and KLRK1, allowing PTPN6 recruitment and then VAV1 dephosphorylation. Upon neutrophils activation negatively regulates IL1B production by recruiting PTPN6 to a SYK-TLR4-CEACAM1 complex, that dephosphorylates SYK, reducing the production of reactive oxygen species (ROS) and lysosome disruption, which in turn, reduces the activity of the inflammasome. Down-regulates neutrophil production by acting as a coinhibitory receptor for CSF3R by down-regulating the CSF3R-STAT3 pathway through recruitment of PTPN6 that dephosphorylates CSF3R. Also regulates insulin action by promoting INS clearance and regulating lipogenesis in liver through regulating insulin signaling. Upon INS stimulation, undergoes phosphorylation by INSR leading to INS clearance by increasing receptor-mediated insulin endocytosis. This inernalization promotes interaction with FASN leading to receptor-mediated insulin degradation and to reduction of FASN activity leading to negative regulation of fatty acid synthesis. INSR-mediated phosphorylation also provokes a down-regulation of cell proliferation through SHC1 interaction resulting in decrease coupling of SHC1 to the MAPK3/ERK1-MAPK1/ERK2 and phosphatidylinositol 3-kinase pathways. Functions as activator in angiogenesis by promoting blood vessel remodeling through endothelial cell differentiation and migration and in arteriogenesis by increasing the number of collateral arteries and collateral vessel calibers after ischemia. Also regulates vascular permeability through the VEGFR2 signaling pathway resulting in control of nitric oxide production. Down-regulates cell growth in response to EGF through its interaction with SHC1 that mediates interaction with EGFR resulting in decrease coupling of SHC1 to the MAPK3/ERK1-MAPK1/ERK2 pathway. Negatively regulates platelet aggregation by decreasing platelet adhesion on type I collagen through the GPVI-FcRgamma complex. Inhibits cell migration and cell scattering through interaction with FLNA; interferes with the interaction of FLNA with RALA. Mediates bile acid transport activity in a phosphorylation dependent manner. Negatively regulates osteoclastogenesis. Its function is as follows. Cell adhesion protein that mediates homophilic cell adhesion in a calcium-independent manner. Promotes populations of T cells regulating IgA production and secretion associated with control of the commensal microbiota and resistance to enteropathogens. The chain is Cell adhesion molecule CEACAM1 from Homo sapiens (Human).